The sequence spans 599 residues: 1-deoxy-D-xylulose-5-phosphate synthase (599 aa).

Thiamine diphosphate is bound by residues histidine 63 and 104-106; that span reads GHS. Residue aspartate 135 participates in Mg(2+) binding. Thiamine diphosphate contacts are provided by residues 136 to 137, asparagine 164, tyrosine 271, and glutamate 352; that span reads GA. Mg(2+) is bound at residue asparagine 164.

It belongs to the transketolase family. DXPS subfamily. As to quaternary structure, homodimer. The cofactor is Mg(2+). Thiamine diphosphate is required as a cofactor.

It catalyses the reaction D-glyceraldehyde 3-phosphate + pyruvate + H(+) = 1-deoxy-D-xylulose 5-phosphate + CO2. It participates in metabolic intermediate biosynthesis; 1-deoxy-D-xylulose 5-phosphate biosynthesis; 1-deoxy-D-xylulose 5-phosphate from D-glyceraldehyde 3-phosphate and pyruvate: step 1/1. Catalyzes the acyloin condensation reaction between C atoms 2 and 3 of pyruvate and glyceraldehyde 3-phosphate to yield 1-deoxy-D-xylulose-5-phosphate (DXP). This is 1-deoxy-D-xylulose-5-phosphate synthase from Nitratiruptor sp. (strain SB155-2).